The following is a 95-amino-acid chain: Large ribosomal subunit protein bL25 (95 aa).

It belongs to the bacterial ribosomal protein bL25 family. As to quaternary structure, part of the 50S ribosomal subunit; part of the 5S rRNA/L5/L18/L25 subcomplex. Contacts the 5S rRNA. Binds to the 5S rRNA independently of L5 and L18.

Its function is as follows. This is one of the proteins that binds to the 5S RNA in the ribosome where it forms part of the central protuberance. This Haemophilus influenzae (strain ATCC 51907 / DSM 11121 / KW20 / Rd) protein is Large ribosomal subunit protein bL25.